Consider the following 489-residue polypeptide: Glutamate--tRNA ligase (489 aa).

The 'HIGH' region signature appears at 11–21 (PSPTGHLHIGG). The 'KMSKS' region motif lies at 253–257 (KLSKR). Residue K256 participates in ATP binding.

This sequence belongs to the class-I aminoacyl-tRNA synthetase family. Glutamate--tRNA ligase type 1 subfamily. As to quaternary structure, monomer.

It is found in the cytoplasm. It catalyses the reaction tRNA(Glu) + L-glutamate + ATP = L-glutamyl-tRNA(Glu) + AMP + diphosphate. Its function is as follows. Catalyzes the attachment of glutamate to tRNA(Glu) in a two-step reaction: glutamate is first activated by ATP to form Glu-AMP and then transferred to the acceptor end of tRNA(Glu). The sequence is that of Glutamate--tRNA ligase from Geobacillus stearothermophilus (Bacillus stearothermophilus).